We begin with the raw amino-acid sequence, 666 residues long: tRNA 5-methylaminomethyl-2-thiouridine biosynthesis bifunctional protein MnmC (666 aa).

A tRNA (mnm(5)s(2)U34)-methyltransferase region spans residues Met-1 to Glu-245. The FAD-dependent cmnm(5)s(2)U34 oxidoreductase stretch occupies residues Ile-270 to Lys-666.

This sequence in the N-terminal section; belongs to the methyltransferase superfamily. tRNA (mnm(5)s(2)U34)-methyltransferase family. In the C-terminal section; belongs to the DAO family. Requires FAD as cofactor.

It is found in the cytoplasm. It carries out the reaction 5-aminomethyl-2-thiouridine(34) in tRNA + S-adenosyl-L-methionine = 5-methylaminomethyl-2-thiouridine(34) in tRNA + S-adenosyl-L-homocysteine + H(+). Catalyzes the last two steps in the biosynthesis of 5-methylaminomethyl-2-thiouridine (mnm(5)s(2)U) at the wobble position (U34) in tRNA. Catalyzes the FAD-dependent demodification of cmnm(5)s(2)U34 to nm(5)s(2)U34, followed by the transfer of a methyl group from S-adenosyl-L-methionine to nm(5)s(2)U34, to form mnm(5)s(2)U34. This Salmonella choleraesuis (strain SC-B67) protein is tRNA 5-methylaminomethyl-2-thiouridine biosynthesis bifunctional protein MnmC.